Consider the following 108-residue polypeptide: Large ribosomal subunit protein uL24 (108 aa).

Belongs to the universal ribosomal protein uL24 family. Part of the 50S ribosomal subunit.

Its function is as follows. One of two assembly initiator proteins, it binds directly to the 5'-end of the 23S rRNA, where it nucleates assembly of the 50S subunit. One of the proteins that surrounds the polypeptide exit tunnel on the outside of the subunit. The chain is Large ribosomal subunit protein uL24 from Mycoplasmopsis pulmonis (strain UAB CTIP) (Mycoplasma pulmonis).